The following is a 156-amino-acid chain: Cyanate hydratase (156 aa).

Residues Arg96, Glu99, and Ser122 contribute to the active site.

This sequence belongs to the cyanase family.

It catalyses the reaction cyanate + hydrogencarbonate + 3 H(+) = NH4(+) + 2 CO2. Its function is as follows. Catalyzes the reaction of cyanate with bicarbonate to produce ammonia and carbon dioxide. The sequence is that of Cyanate hydratase from Burkholderia thailandensis (strain ATCC 700388 / DSM 13276 / CCUG 48851 / CIP 106301 / E264).